The chain runs to 339 residues: tRNA N6-adenosine threonylcarbamoyltransferase (339 aa).

Residues His-107 and His-111 each contribute to the Fe cation site. Residues 129–133 (LVSGG), Asp-162, Gly-175, and Asn-279 each bind substrate. Position 307 (Asp-307) interacts with Fe cation.

It belongs to the KAE1 / TsaD family. Fe(2+) serves as cofactor.

It localises to the cytoplasm. The catalysed reaction is L-threonylcarbamoyladenylate + adenosine(37) in tRNA = N(6)-L-threonylcarbamoyladenosine(37) in tRNA + AMP + H(+). Its function is as follows. Required for the formation of a threonylcarbamoyl group on adenosine at position 37 (t(6)A37) in tRNAs that read codons beginning with adenine. Is involved in the transfer of the threonylcarbamoyl moiety of threonylcarbamoyl-AMP (TC-AMP) to the N6 group of A37, together with TsaE and TsaB. TsaD likely plays a direct catalytic role in this reaction. The sequence is that of tRNA N6-adenosine threonylcarbamoyltransferase from Campylobacter curvus (strain 525.92).